The primary structure comprises 377 residues: Mannan endo-1,4-beta-mannosidase A (377 aa).

An N-terminal signal peptide occupies residues 1–18 (MKLSHMLLSLASLGVATA). Substrate is bound at residue Trp84. Residue Asn105 is glycosylated (N-linked (GlcNAc...) asparagine). Asn197 lines the substrate pocket. Glu198 serves as the catalytic Proton donor. Asn255 is a glycosylation site (N-linked (GlcNAc...) asparagine). Residue Tyr273 participates in substrate binding. The active-site Nucleophile is Glu306. Residue Asn326 is glycosylated (N-linked (GlcNAc...) asparagine). Trp336 is a binding site for substrate. Asn357 carries an N-linked (GlcNAc...) asparagine glycan.

This sequence belongs to the glycosyl hydrolase 5 (cellulase A) family.

The protein localises to the secreted. The catalysed reaction is Random hydrolysis of (1-&gt;4)-beta-D-mannosidic linkages in mannans, galactomannans and glucomannans.. Endo-1,4-mannanase, a crucial enzyme for depolymerization of seed galactomannans and wood galactoglucomannans. The chain is Mannan endo-1,4-beta-mannosidase A (manA) from Aspergillus aculeatus.